The primary structure comprises 903 residues: DNA-directed DNA polymerase (903 aa).

The tract at residues 103-340 is 3'-5'exonuclease; sequence YDHTKIRVAN…VLQIDAKRQF (238 aa). The Mg(2+) site is built by D114, E116, and D222. The beta hairpin stretch occupies residues 248-264; sequence TRVKVIENMYGSREIIT. 3 residues coordinate Mg(2+): D327, D411, and L412. Positions 380–903 are polymerase; the sequence is IPQGRSHPVQ…KASLFDMFDF (524 aa). Residues 414–416, R482, and K560 contribute to the substrate site; that span reads SLY. Position 623 (D623) interacts with Mg(2+). Residues 705–708 form a binding of DNA in B-conformation region; it reads KKRY. The tract at residues 897-903 is interaction with the polymerase clamp; it reads LFDMFDF.

It belongs to the DNA polymerase type-B family. Part of the replicase complex that includes the DNA polymerase, the polymerase clamp, the clamp loader complex, the single-stranded DNA binding protein, and the primase/helicase. Interacts with the polymerase clamp; this interaction constitutes the polymerase holoenzyme. It depends on Mg(2+) as a cofactor.

It carries out the reaction DNA(n) + a 2'-deoxyribonucleoside 5'-triphosphate = DNA(n+1) + diphosphate. Its function is as follows. Replicates the viral genomic DNA. This polymerase possesses two enzymatic activities: DNA synthesis (polymerase) and an exonucleolytic activity that degrades single-stranded DNA in the 3'- to 5'-direction for proofreading purpose. In Escherichia coli (Bacteriophage RB69), this protein is DNA-directed DNA polymerase (43).